The sequence spans 161 residues: ATP synthase subunit b 1 (161 aa).

A helical transmembrane segment spans residues 6-26 (EFYVALGFVIFVAILLYYGVH).

It belongs to the ATPase B chain family. As to quaternary structure, F-type ATPases have 2 components, F(1) - the catalytic core - and F(0) - the membrane proton channel. F(1) has five subunits: alpha(3), beta(3), gamma(1), delta(1), epsilon(1). F(0) has three main subunits: a(1), b(2) and c(10-14). The alpha and beta chains form an alternating ring which encloses part of the gamma chain. F(1) is attached to F(0) by a central stalk formed by the gamma and epsilon chains, while a peripheral stalk is formed by the delta and b chains.

It localises to the cell inner membrane. Functionally, f(1)F(0) ATP synthase produces ATP from ADP in the presence of a proton or sodium gradient. F-type ATPases consist of two structural domains, F(1) containing the extramembraneous catalytic core and F(0) containing the membrane proton channel, linked together by a central stalk and a peripheral stalk. During catalysis, ATP synthesis in the catalytic domain of F(1) is coupled via a rotary mechanism of the central stalk subunits to proton translocation. Component of the F(0) channel, it forms part of the peripheral stalk, linking F(1) to F(0). The sequence is that of ATP synthase subunit b 1 from Beijerinckia indica subsp. indica (strain ATCC 9039 / DSM 1715 / NCIMB 8712).